Consider the following 368-residue polypeptide: DNA-directed RNA polymerase II subunit GRINL1A (368 aa).

Residues Lys29–Val68 form an important for transcription repressor activity region. Composition is skewed to polar residues over residues Ser116–Gly131, Gly205–Gly224, and Gln258–Ser273. Disordered regions lie at residues Ser116–Ser186, Asp203–Lys227, and Pro255–Lys282. The interval Lys227–His298 is interaction with Pol II. Ser270 carries the phosphoserine modification. The segment at Met299–Lys314 is important for transcription repressor activity. Residues Thr301–Arg335 adopt a coiled-coil conformation. Positions Gln315–Met340 are interaction with Pol II. The tract at residues Lys339–Phe368 is disordered. Acidic residues predominate over residues Asp358–Phe368.

This sequence belongs to the GRINL1 family. In terms of assembly, component of the Pol II(G) complex, which contains the RNA polymerase II (Pol II) core complex subunits and POLR2M isoform 1. Pol II(G) appears to be an abundant form of Pol II. Post-translationally, dephosphorylated at Ser-270 by the PNUTS-PP1 complex, promoting RNA polymerase II transcription pause-release. Detected in adult an fetal brain. Detected in heart, kidney, skeletal muscle, small intestine, lung, prostate and testis.

The protein localises to the nucleus. In terms of biological role, appears to be a stable component of the Pol II(G) complex form of RNA polymerase II (Pol II). Pol II synthesizes mRNA precursors and many functional non-coding RNAs and is the central component of the basal RNA polymerase II transcription machinery. May play a role in the Mediator complex-dependent regulation of transcription activation. Acts as a negative regulator of transcriptional activation; this repression is relieved by the Mediator complex, which restores Pol II(G) activator-dependent transcription to a level equivalent to that of Pol II. In Homo sapiens (Human), this protein is DNA-directed RNA polymerase II subunit GRINL1A (POLR2M).